Consider the following 84-residue polypeptide: Anaphase-promoting complex subunit 11 (84 aa).

Cysteine 23, cysteine 26, cysteine 34, cysteine 37, cysteine 44, cysteine 51, histidine 53, histidine 56, histidine 58, cysteine 59, cysteine 73, and cysteine 76 together coordinate Zn(2+). An RING-type zinc finger spans residues 34–77 (CPDCKVPGDDCPLVWGQCSHCFHMHCILKWLHAQQVQQHCPMCR).

This sequence belongs to the RING-box family. In terms of assembly, the mammalian APC/C is composed at least of 14 distinct subunits ANAPC1, ANAPC2, CDC27/APC3, ANAPC4, ANAPC5, CDC16/APC6, ANAPC7, CDC23/APC8, ANAPC10, ANAPC11, CDC26/APC12, ANAPC13, ANAPC15 and ANAPC16 that assemble into a complex of at least 19 chains with a combined molecular mass of around 1.2 MDa; APC/C interacts with FZR1 and FBXO5. Interacts with the cullin domain of ANAPC2. Interacts with UBE2D2. Auto-ubiquitinated. Expressed at high levels in skeletal muscle and heart; in moderate levels in brain, kidney, and liver; and at low levels in colon, thymus, spleen, small intestine, placenta, lung and peripheral blood leukocyte.

Its subcellular location is the cytoplasm. The protein resides in the nucleus. The protein operates within protein modification; protein ubiquitination. Functionally, together with the cullin protein ANAPC2, constitutes the catalytic component of the anaphase promoting complex/cyclosome (APC/C), a cell cycle-regulated E3 ubiquitin ligase that controls progression through mitosis and the G1 phase of the cell cycle. The APC/C complex acts by mediating ubiquitination and subsequent degradation of target proteins: it mainly mediates the formation of 'Lys-11'-linked polyubiquitin chains and, to a lower extent, the formation of 'Lys-48'- and 'Lys-63'-linked polyubiquitin chains. The APC/C complex catalyzes assembly of branched 'Lys-11'-/'Lys-48'-linked branched ubiquitin chains on target proteins. May recruit the E2 ubiquitin-conjugating enzymes to the complex. The chain is Anaphase-promoting complex subunit 11 (ANAPC11) from Homo sapiens (Human).